We begin with the raw amino-acid sequence, 352 residues long: C-C chemokine receptor type 5 (352 aa).

At 1-30 (MDYQVSSPTYDIDYYTSGPCQKINVKQIAA) the chain is on the extracellular side. Sulfotyrosine is present on tyrosine 3. Serine 6 and serine 7 each carry an O-linked (GalNAc...) serine glycan. Sulfotyrosine occurs at positions 10, 14, and 15. Intrachain disulfides connect cysteine 20/cysteine 269 and cysteine 101/cysteine 178. Residues 31–58 (RLLPPLYSLVFIFGFVGNMLVILILINC) traverse the membrane as a helical segment. Residues 59–68 (KRLKSMTDIY) are Cytoplasmic-facing. A helical membrane pass occupies residues 69 to 89 (LLNLAISDLFFLLTVPFWAHY). Residues 90 to 102 (AAAQWDFGNTMCQ) lie on the Extracellular side of the membrane. Residues 103 to 124 (LLTGLYFIGFFSGIFFIILLTI) traverse the membrane as a helical segment. At 125-141 (DRYLAIVHAVFALKART) the chain is on the cytoplasmic side. The chain crosses the membrane as a helical span at residues 142–166 (VTFGVVTSVITWVVAVFASLPGIIF). The Extracellular segment spans residues 167-198 (TRSQKEGLHYTCSSHFPYSQYQFWKNFQTLKI). The helical transmembrane segment at 199–218 (VILGLVLPLLVMVICYSGIL) threads the bilayer. Residues 219–235 (KTLLRCRNEKKRHRAVR) lie on the Cytoplasmic side of the membrane. The chain crosses the membrane as a helical span at residues 236–260 (LIFTIMIVYFLFWAPYNIVLLLNTF). Residues 261–277 (QEFFGLNNCSSSNRLDQ) lie on the Extracellular side of the membrane. The helical transmembrane segment at 278–301 (AMQVTETLGMTHCCINPIIYAFVG) threads the bilayer. The Cytoplasmic portion of the chain corresponds to 302-352 (EKFRNYLLVFFQKHIAKHFCKCCSIFQQEAPERASSVYTRSTGEQEISVGL). Residues cysteine 321, cysteine 323, and cysteine 324 are each lipidated (S-palmitoyl cysteine). A phosphoserine; by BARK1 mark is found at serine 336, serine 337, serine 342, and serine 349.

Belongs to the G-protein coupled receptor 1 family. Interacts with PRAF2. Efficient ligand binding to CCL3/MIP-1alpha and CCL4/MIP-1beta requires sulfation, O-glycosylation and sialic acid modifications. Glycosylation on Ser-6 is required for efficient binding of CCL4. Interacts with GRK2. Interacts with ARRB1 and ARRB2. Interacts with CNIH4. Interacts with S100A4; this interaction stimulates T-lymphocyte chemotaxis. In terms of processing, sulfated on at least 2 of the N-terminal tyrosines. Sulfation is required for efficient binding of the chemokines, CCL3 and CCL4. Post-translationally, palmitoylation in the C-terminal is important for cell surface expression. Phosphorylation on serine residues in the C-terminal is stimulated by binding CC chemokines especially by APO-RANTES. In terms of processing, O-glycosylated, but not N-glycosylated. Ser-6 appears to be the major site even if Ser-7 may be also O-glycosylated. Also sialylated glycans present which contribute to chemokine binding. Thr-16 and Ser-17 may also be glycosylated and, if so, with small moieties such as a T-antigen.

The protein resides in the cell membrane. Its function is as follows. Receptor for a number of inflammatory CC-chemokines including CCL3/MIP-1-alpha, CCL4/MIP-1-beta and RANTES and subsequently transduces a signal by increasing the intracellular calcium ion level. May play a role in the control of granulocytic lineage proliferation or differentiation. Participates in T-lymphocyte migration to the infection site by acting as a chemotactic receptor. This chain is C-C chemokine receptor type 5 (CCR5), found in Hylobates moloch (Silvery gibbon).